The following is a 1021-amino-acid chain: Outer capsid protein P3 (1021 aa).

The protein belongs to the phytoreovirus inner capsid protein P3 family. As to quaternary structure, homodimer. Homomultimer.

Its subcellular location is the virion. It localises to the host cytoplasm. In terms of biological role, capsid protein which self-assembles to form the inner icosahedral capsid with a T=2 symmetry, and consisting of 60 P3 dimers. The sequence is that of Outer capsid protein P3 from Nephotettix cincticeps (Green rice leafhopper).